Reading from the N-terminus, the 335-residue chain is D-arabinose 1-dehydrogenase (335 aa).

Catalysis depends on Tyr58, which acts as the Proton donor. His124 serves as a coordination point for substrate. 221-287 (SLLRSQETRQ…VSSMEELKLA (67 aa)) contributes to the NAD(+) binding site.

The protein belongs to the aldo/keto reductase family. Aldo/keto reductase 2 subfamily.

It carries out the reaction D-arabinose + NAD(+) = D-arabinono-1,4-lactone + NADH + H(+). The sequence is that of D-arabinose 1-dehydrogenase (ARA2) from Saccharomyces cerevisiae (strain ATCC 204508 / S288c) (Baker's yeast).